Reading from the N-terminus, the 849-residue chain is DNA mismatch repair protein MutS (849 aa).

665 to 672 (GPNMAGKS) contributes to the ATP binding site.

The protein belongs to the DNA mismatch repair MutS family.

Functionally, this protein is involved in the repair of mismatches in DNA. It is possible that it carries out the mismatch recognition step. This protein has a weak ATPase activity. This is DNA mismatch repair protein MutS from Wolbachia pipientis wMel.